Here is a 269-residue protein sequence, read N- to C-terminus: 3-methyl-2-oxobutanoate hydroxymethyltransferase (269 aa).

Residues Asp50 and Asp89 each contribute to the Mg(2+) site. 3-methyl-2-oxobutanoate is bound by residues 50–51, Asp89, and Lys119; that span reads DS. Glu121 is a binding site for Mg(2+). Glu187 (proton acceptor) is an active-site residue.

It belongs to the PanB family. As to quaternary structure, homodecamer; pentamer of dimers. The cofactor is Mg(2+).

It localises to the cytoplasm. It carries out the reaction 3-methyl-2-oxobutanoate + (6R)-5,10-methylene-5,6,7,8-tetrahydrofolate + H2O = 2-dehydropantoate + (6S)-5,6,7,8-tetrahydrofolate. The protein operates within cofactor biosynthesis; (R)-pantothenate biosynthesis; (R)-pantoate from 3-methyl-2-oxobutanoate: step 1/2. Functionally, catalyzes the reversible reaction in which hydroxymethyl group from 5,10-methylenetetrahydrofolate is transferred onto alpha-ketoisovalerate to form ketopantoate. This chain is 3-methyl-2-oxobutanoate hydroxymethyltransferase, found in Corynebacterium efficiens (strain DSM 44549 / YS-314 / AJ 12310 / JCM 11189 / NBRC 100395).